The primary structure comprises 22 residues: Antimicrobial peptide 5 (22 aa).

Position 22 is a leucine amide (L22).

As to expression, skin.

The protein localises to the secreted. In terms of biological role, has very strong antimicrobial activity against Gram-positive bacterium S.aureus, Gram-negative bacterium E.coli and yeast C.albicans. Has strong hemolytic activity against human red blood cells. The sequence is that of Antimicrobial peptide 5 from Xenopus tropicalis (Western clawed frog).